The sequence spans 530 residues: MSAKEKFTSLSPAEFFKRNPELAGFPNPARALYQTVRELIENSLDATDVHGILPNIKITIDLIDEARQIYKVNVVDNGIGIPPQEVPNAFGRVLYSSKYANRQTRGMYGLGVKAAVLYSQMHQDKPIEIETSPANSKRIYTFKLKIDINKNEPIIVERGSVENTRGFHGTSVAISIPGDWPKAKSRIYEYIKRTYIITPYAEFIFKDPEGNVTYYPRLTNKIPKPPQEVKPHPYGVDREEIKILINNLKRDYTIKEFLVNEFQSIGDTTADKILELAGLKPNKKVKNLTEEEITRLVETFKKYEDFRSPSADSLSVIGEDLIELGLKKIFNPDFAASITRKPKAYQGHPFIVEAGVAFGGSIPVGEEPIVLRYANKIPLIYDEKSDVIWKVVEELDWKRYGIESDQYQMVVMVHLCSTKIPYKSAGKESIAEVEDIEKEIKNALMEVARKLKQYLSEKRKEQEAKKKLLAYLKYIPEVSRSLATFLASGNKELVSKYQNEISEGLFKLISKKLDLINIEEYRKVYRVDNE.

ATP contacts are provided by residues Asn42, Asp76, 97-98 (SK), 106-113 (GMYGLGVK), and Lys427.

Belongs to the TOP6B family. In terms of assembly, homodimer. Heterotetramer of two Top6A and two Top6B chains.

The enzyme catalyses ATP-dependent breakage, passage and rejoining of double-stranded DNA.. In terms of biological role, relaxes both positive and negative superturns and exhibits a strong decatenase activity. This chain is Type 2 DNA topoisomerase 6 subunit B, found in Saccharolobus islandicus (strain Y.N.15.51 / Yellowstone #2) (Sulfolobus islandicus).